We begin with the raw amino-acid sequence, 128 residues long: Fluoride-specific ion channel FluC (128 aa).

4 helical membrane passes run 3–23, 34–54, 69–89, and 100–120; these read FSVIFAVGIGGFFGAISRFLI, LFPVGTLTVNVLGSFIIGFLY, FITGFLGALTTFSTFSLETLL, and FLNILLNVILTISSTFAAIIL. Na(+) is bound by residues Gly-75 and Thr-78.

The protein belongs to the fluoride channel Fluc/FEX (TC 1.A.43) family.

It localises to the cell inner membrane. It catalyses the reaction fluoride(in) = fluoride(out). With respect to regulation, na(+) is not transported, but it plays an essential structural role and its presence is essential for fluoride channel function. Fluoride-specific ion channel. Important for reducing fluoride concentration in the cell, thus reducing its toxicity. The sequence is that of Fluoride-specific ion channel FluC from Nitratiruptor sp. (strain SB155-2).